The sequence spans 118 residues: ATP synthase subunit c (118 aa).

A run of 2 helical transmembrane segments spans residues 34-54 (AIFA…GAVG) and 88-108 (MAMA…LIFA).

This sequence belongs to the ATPase C chain family. As to quaternary structure, F-type ATPases have 2 components, F(1) - the catalytic core - and F(0) - the membrane proton channel. F(1) has five subunits: alpha(3), beta(3), gamma(1), delta(1), epsilon(1). F(0) has three main subunits: a(1), b(2) and c(10-14). The alpha and beta chains form an alternating ring which encloses part of the gamma chain. F(1) is attached to F(0) by a central stalk formed by the gamma and epsilon chains, while a peripheral stalk is formed by the delta and b chains.

Its subcellular location is the cell inner membrane. In terms of biological role, f(1)F(0) ATP synthase produces ATP from ADP in the presence of a proton or sodium gradient. F-type ATPases consist of two structural domains, F(1) containing the extramembraneous catalytic core and F(0) containing the membrane proton channel, linked together by a central stalk and a peripheral stalk. During catalysis, ATP synthesis in the catalytic domain of F(1) is coupled via a rotary mechanism of the central stalk subunits to proton translocation. Its function is as follows. Key component of the F(0) channel; it plays a direct role in translocation across the membrane. A homomeric c-ring of between 10-14 subunits forms the central stalk rotor element with the F(1) delta and epsilon subunits. The chain is ATP synthase subunit c from Syntrophus aciditrophicus (strain SB).